The primary structure comprises 179 residues: Large ribosomal subunit protein uL5 (179 aa).

Belongs to the universal ribosomal protein uL5 family. As to quaternary structure, part of the 50S ribosomal subunit; part of the 5S rRNA/L5/L18/L25 subcomplex. Contacts the 5S rRNA and the P site tRNA. Forms a bridge to the 30S subunit in the 70S ribosome.

Functionally, this is one of the proteins that bind and probably mediate the attachment of the 5S RNA into the large ribosomal subunit, where it forms part of the central protuberance. In the 70S ribosome it contacts protein S13 of the 30S subunit (bridge B1b), connecting the 2 subunits; this bridge is implicated in subunit movement. Contacts the P site tRNA; the 5S rRNA and some of its associated proteins might help stabilize positioning of ribosome-bound tRNAs. The polypeptide is Large ribosomal subunit protein uL5 (Burkholderia cenocepacia (strain HI2424)).